Reading from the N-terminus, the 74-residue chain is MATKISHLVSLLLSLLLLLLFISSQVGFTEAKRDERKKMSSPPIPSPLIPSPPIPPPPPRFYVPPSKSRRGKGP.

An N-terminal signal peptide occupies residues 1–31; that stretch reads MATKISHLVSLLLSLLLLLLFISSQVGFTEA. The segment at 29–74 is disordered; that stretch reads TEAKRDERKKMSSPPIPSPLIPSPPIPPPPPRFYVPPSKSRRGKGP. A compositionally biased stretch (pro residues) spans 42–62; sequence PPIPSPLIPSPPIPPPPPRFY. The short motif at 60–74 is the SCOOP motif element; it reads RFYVPPSKSRRGKGP. The short motif at 66–68 is the SxS motif essential for MIK2 binding element; the sequence is SKS.

The protein belongs to the serine rich endogenous peptide (SCOOP) phytocytokine family. As to quaternary structure, interacts with MIK2 (via extracellular leucine-rich repeat domain); this interaction triggers the formation of complex between MIK2 and the BAK1/SERK3 and SERK4 coreceptors, and subsequent BAK1 activation by phosphorylation.

The protein localises to the cell membrane. It is found in the secreted. The protein resides in the extracellular space. It localises to the apoplast. Brassicaceae-specific phytocytokine (plant endogenous peptide released into the apoplast) perceived by MIK2 in a BAK1/SERK3 and SERK4 coreceptors-dependent manner, that modulates various physiological and antimicrobial processes including growth prevention and reactive oxygen species (ROS) response regulation. The chain is Serine rich endogenous peptide 16 from Arabidopsis thaliana (Mouse-ear cress).